The chain runs to 277 residues: Inositol monophosphatase 1 (277 aa).

The Mg(2+) site is built by Glu-70, Asp-90, Ile-92, and Asp-93. Glu-70 is a binding site for substrate. Residues 92–95 (IDGT), 194–196 (GTA), Glu-213, and Asp-220 each bind substrate. Position 220 (Asp-220) interacts with Mg(2+).

Belongs to the inositol monophosphatase superfamily. In terms of assembly, homodimer. Requires Mg(2+) as cofactor. Ubiquitous.

It is found in the cytoplasm. The enzyme catalyses a myo-inositol phosphate + H2O = myo-inositol + phosphate. The catalysed reaction is 1D-myo-inositol 1-phosphate + H2O = myo-inositol + phosphate. It carries out the reaction 1D-myo-inositol 2-phosphate + H2O = myo-inositol + phosphate. It catalyses the reaction 1D-myo-inositol 3-phosphate + H2O = myo-inositol + phosphate. The enzyme catalyses 1D-myo-inositol 4-phosphate + H2O = myo-inositol + phosphate. The catalysed reaction is 1D-myo-inositol 5-phosphate + H2O = myo-inositol + phosphate. It carries out the reaction 1D-myo-inositol 6-phosphate + H2O = myo-inositol + phosphate. It catalyses the reaction scyllo-inositol 1-phosphate + H2O = scyllo-inositol + phosphate. The enzyme catalyses alpha-D-galactose 1-phosphate + H2O = D-galactose + phosphate. The catalysed reaction is alpha-D-glucose 1-phosphate + H2O = D-glucose + phosphate. It carries out the reaction D-glucose 6-phosphate + H2O = D-glucose + phosphate. It catalyses the reaction beta-D-fructose 1-phosphate + H2O = D-fructose + phosphate. The enzyme catalyses glycerol 2-phosphate + H2O = glycerol + phosphate. The catalysed reaction is adenosine 2'-phosphate + H2O = adenosine + phosphate. Its pathway is polyol metabolism; myo-inositol biosynthesis; myo-inositol from D-glucose 6-phosphate: step 2/2. Activity with myo-inositol monophosphate and D-galactose 1-phosphate is inhibited by Li(+), Ca(2+) and Mn(2+), but also by Mg(2+) at concentrations above 3 mM. In terms of biological role, phosphatase involved in the dephosphorylation of myo-inositol monophosphate to generate myo-inositol. Is also able to dephosphorylate scyllo-inositol-phosphate, myo-inositol 1,4-diphosphate, scyllo-inositol-1,3-diphosphate and scyllo-inositol-1,4-diphosphate. Also dephosphorylates in vitro other sugar-phosphates including D-galactose-1-phosphate, glucose-1-phosphate, glucose-6-phosphate, fructose-1-phosphate, beta-glycerophosphate and 2'-AMP. Responsible for the provision of inositol required for synthesis of phosphatidylinositol and polyphosphoinositides, and involved in maintaining normal brain function. Has been implicated as the pharmacological target for lithium Li(+) action in brain. Is equally active with myo-inositol monophosphate and D-galactose 1-phosphate. In Rattus norvegicus (Rat), this protein is Inositol monophosphatase 1 (Impa1).